A 225-amino-acid polypeptide reads, in one-letter code: Paired immunoglobulin-like type 2 receptor beta-2 (225 aa).

The N-terminal stretch at 1–31 (MALLISLPGETPAMAQILLLLSSACLHAGNS) is a signal peptide. Over 32–195 (ARSNGGNDFG…NPSLMNLGAM (164 aa)) the chain is Extracellular. Asn90, Asn107, and Asn160 each carry an N-linked (GlcNAc...) asparagine glycan. Residues 196–216 (VTMLLAKVVVIILVYGWMIFL) form a helical membrane-spanning segment. Topologically, residues 217–225 (RWKQRPDPA) are cytoplasmic.

The protein resides in the membrane. Its function is as follows. Paired receptors consist of highly related activating and inhibitory receptors and are widely involved in the regulation of the immune system. PILRB2 is probably a cellular signaling activating receptor that associates with ITAM-bearing adapter molecules on the cell surface. In Mus musculus (Mouse), this protein is Paired immunoglobulin-like type 2 receptor beta-2 (Pilrb2).